The following is an 876-amino-acid chain: Vacuolar protein sorting-associated protein 39 homolog (876 aa).

The CNH domain occupies glycine 14–threonine 310. A CHCR repeat occupies glutamate 578 to tyrosine 741.

It belongs to the VAM6/VPS39 family. As to quaternary structure, part of the homotypic fusion and vacuole protein sorting (HOPS) complex, composed of Vps16A, car/Vps33A, dor/Vps18, Vps39, Vps11 and lt/Vps41. Interacts with Rab2 (GTP-bound form); the interaction is probably direct.

The protein resides in the cytoplasm. It is found in the lysosome membrane. The protein localises to the late endosome membrane. It localises to the late endosome. Its subcellular location is the lysosome. Part of the homotypic fusion and vacuole protein sorting (HOPS) tethering complex involved in endo-lysosomal vesicle trafficking and lysosome biogenesis. The HOPS complex facilitates docking and fusion of lysosomes with late endosomes and several other types of vesicles. The HOPS complex is also involved in autophagy and crinophagy (the elimination of unused secretory granules through their fusion with lysosomes). The HOPS complex mediates autophagocitic flux, probably by binding autophagosome-associated Syx17/syntaxin 17, promoting assembly of the trans-SNARE complex and instigating autophagosome-lysosome fusion. Independent of Syx17/syntaxin 17, HOPS is involved in biosynthetic transport to lysosomes and lysosome-related organelles such as eye-pigment granules. Required for autophagocytosis-dependent remodeling of myofibrils and transverse-tubules (T-tubules) during metamorphosis. This Drosophila melanogaster (Fruit fly) protein is Vacuolar protein sorting-associated protein 39 homolog.